The following is a 428-amino-acid chain: Elongation factor 1-alpha (428 aa).

The 211-residue stretch at 5-215 (KPHVNIVFIG…ALDQIPEPPK (211 aa)) folds into the tr-type G domain. Residues 14–21 (GHVDHGKS) are G1. 14 to 21 (GHVDHGKS) lines the GTP pocket. Serine 21 is a Mg(2+) binding site. Positions 68–72 (GITID) are G2. Residues 89–92 (DAPG) form a G3 region. Residues 89-93 (DAPGH) and 144-147 (NKMD) contribute to the GTP site. Positions 144–147 (NKMD) are G4. Residues 181-183 (SAW) form a G5 region.

Belongs to the TRAFAC class translation factor GTPase superfamily. Classic translation factor GTPase family. EF-Tu/EF-1A subfamily.

Its subcellular location is the cytoplasm. The enzyme catalyses GTP + H2O = GDP + phosphate + H(+). In terms of biological role, GTP hydrolase that promotes the GTP-dependent binding of aminoacyl-tRNA to the A-site of ribosomes during protein biosynthesis. The sequence is that of Elongation factor 1-alpha from Thermococcus onnurineus (strain NA1).